A 380-amino-acid polypeptide reads, in one-letter code: Outer mitochondrial transmembrane helix translocase (380 aa).

Residues 1–18 are Mitochondrial intermembrane-facing; it reads MLSDIPRDALLRPLTRNE. A helical membrane pass occupies residues 19 to 37; that stretch reads VVGMLVRLTVFGAATYYSI. Residues 38–380 lie on the Cytoplasmic side of the membrane; the sequence is KWVVDALDPT…PANLREVPLD (343 aa). 136 to 143 provides a ligand contact to ATP; it reads GPPGCGKT.

This sequence belongs to the AAA ATPase family. MSP1 subfamily.

The protein resides in the mitochondrion outer membrane. It localises to the peroxisome membrane. The protein localises to the postsynaptic cell membrane. The catalysed reaction is [protein]-with a C-terminal TM segment(out) + ATP + H2O = [protein]-with a C-terminal TM segment(in) + ADP + phosphate + H(+). Functionally, outer mitochondrial translocase required to remove mislocalized tail-anchored transmembrane proteins on mitochondria. Specifically recognizes and binds tail-anchored transmembrane proteins: acts as a dislocase that mediates the ATP-dependent extraction of mistargeted tail-anchored transmembrane proteins from the mitochondrion outer membrane. Also plays a critical role in regulating the surface expression of AMPA receptors (AMPAR), thereby regulating synaptic plasticity and learning and memory. In Danio rerio (Zebrafish), this protein is Outer mitochondrial transmembrane helix translocase.